Reading from the N-terminus, the 351-residue chain is Anthranilate phosphoribosyltransferase (351 aa).

Residues Gly80, 83–84, Thr88, 90–93, 108–116, and Ser120 each bind 5-phospho-alpha-D-ribose 1-diphosphate; these read GD, NIST, and KHGNRSVTS. Residue Gly80 participates in anthranilate binding. Ser92 lines the Mg(2+) pocket. Asn111 is a binding site for anthranilate. Arg166 lines the anthranilate pocket. 2 residues coordinate Mg(2+): Asp229 and Glu230.

It belongs to the anthranilate phosphoribosyltransferase family. As to quaternary structure, homodimer. The cofactor is Mg(2+).

It carries out the reaction N-(5-phospho-beta-D-ribosyl)anthranilate + diphosphate = 5-phospho-alpha-D-ribose 1-diphosphate + anthranilate. The protein operates within amino-acid biosynthesis; L-tryptophan biosynthesis; L-tryptophan from chorismate: step 2/5. In terms of biological role, catalyzes the transfer of the phosphoribosyl group of 5-phosphorylribose-1-pyrophosphate (PRPP) to anthranilate to yield N-(5'-phosphoribosyl)-anthranilate (PRA). This Chlorobium limicola (strain DSM 245 / NBRC 103803 / 6330) protein is Anthranilate phosphoribosyltransferase.